Reading from the N-terminus, the 352-residue chain is Elongation factor Tu, mitochondrial (352 aa).

Residues 45–241 form the tr-type G domain; that stretch reads RPHVNVGTIG…AIDTHIPLPH (197 aa). The segment at 54–61 is G1; the sequence is GHVDHGKT. 5 residues coordinate GTP: aspartate 57, glycine 59, lysine 60, threonine 61, and threonine 62. Threonine 61 is a binding site for Mg(2+). The G2 stretch occupies residues 95–99; sequence GITIN. Residues 116-119 are G3; sequence DCPG. GTP contacts are provided by asparagine 171, aspartate 174, serine 209, alanine 210, and leucine 211. A G4 region spans residues 171-174; the sequence is NKAD. The G5 stretch occupies residues 209 to 211; that stretch reads SAL.

Its subcellular location is the mitochondrion. It catalyses the reaction GTP + H2O = GDP + phosphate + H(+). Functionally, GTP hydrolase that promotes the GTP-dependent binding of aminoacyl-tRNA to the A-site of ribosomes during protein biosynthesis. The chain is Elongation factor Tu, mitochondrial from Gallus gallus (Chicken).